Here is a 352-residue protein sequence, read N- to C-terminus: Peptide chain release factor 1 (352 aa).

Position 233 is an N5-methylglutamine (Q233). Positions 288 to 309 (NAKDRKEQVGSGDRSERIRTYN) are disordered. A compositionally biased stretch (basic and acidic residues) spans 289–306 (AKDRKEQVGSGDRSERIR).

The protein belongs to the prokaryotic/mitochondrial release factor family. In terms of processing, methylated by PrmC. Methylation increases the termination efficiency of RF1.

The protein localises to the cytoplasm. In terms of biological role, peptide chain release factor 1 directs the termination of translation in response to the peptide chain termination codons UAG and UAA. In Helicobacter pylori (strain HPAG1), this protein is Peptide chain release factor 1.